A 182-amino-acid chain; its full sequence is Adenine phosphoribosyltransferase (182 aa).

Belongs to the purine/pyrimidine phosphoribosyltransferase family. Homodimer.

The protein localises to the cytoplasm. It carries out the reaction AMP + diphosphate = 5-phospho-alpha-D-ribose 1-diphosphate + adenine. The protein operates within purine metabolism; AMP biosynthesis via salvage pathway; AMP from adenine: step 1/1. Catalyzes a salvage reaction resulting in the formation of AMP, that is energically less costly than de novo synthesis. This is Adenine phosphoribosyltransferase from Bordetella avium (strain 197N).